A 449-amino-acid chain; its full sequence is Lipase (449 aa).

The first 23 residues, 1-23 (MGVFDYKNLGTEASKTLFADATA), serve as a signal peptide directing secretion. Residues 58–77 (RQHRLPGSDPPAFPGILTRK) are disordered. Ser-206 acts as the Charge relay system in catalysis. Positions 318, 387, and 396 each coordinate Ca(2+). Hemolysin-type calcium-binding repeat units follow at residues 372–389 (IGSD…ADFI) and 390–407 (EGGK…HNTF).

Belongs to the AB hydrolase superfamily. Lipase family.

The enzyme catalyses a triacylglycerol + H2O = a diacylglycerol + a fatty acid + H(+). This is Lipase from Pseudomonas fluorescens.